Reading from the N-terminus, the 385-residue chain is Chaperone protein DnaJ (385 aa).

Residues 3–68 (DYYEILGVTR…QKRAAYDRFG (66 aa)) form the J domain. The CR-type zinc finger occupies 135 to 213 (GAEVEITVPA…CHGHGQVRRE (79 aa)). 8 residues coordinate Zn(2+): C148, C151, C165, C168, C187, C190, C201, and C204. CXXCXGXG motif repeat units lie at residues 148–155 (CEVCEGSG), 165–172 (CGTCGGAG), 187–194 (CPRCGGSG), and 201–208 (CSNCHGHG).

This sequence belongs to the DnaJ family. As to quaternary structure, homodimer. It depends on Zn(2+) as a cofactor.

Its subcellular location is the cytoplasm. Its function is as follows. Participates actively in the response to hyperosmotic and heat shock by preventing the aggregation of stress-denatured proteins and by disaggregating proteins, also in an autonomous, DnaK-independent fashion. Unfolded proteins bind initially to DnaJ; upon interaction with the DnaJ-bound protein, DnaK hydrolyzes its bound ATP, resulting in the formation of a stable complex. GrpE releases ADP from DnaK; ATP binding to DnaK triggers the release of the substrate protein, thus completing the reaction cycle. Several rounds of ATP-dependent interactions between DnaJ, DnaK and GrpE are required for fully efficient folding. Also involved, together with DnaK and GrpE, in the DNA replication of plasmids through activation of initiation proteins. This Caulobacter vibrioides (strain ATCC 19089 / CIP 103742 / CB 15) (Caulobacter crescentus) protein is Chaperone protein DnaJ.